The primary structure comprises 168 residues: Large ribosomal subunit protein uL10 (168 aa).

This sequence belongs to the universal ribosomal protein uL10 family. Part of the ribosomal stalk of the 50S ribosomal subunit. The N-terminus interacts with L11 and the large rRNA to form the base of the stalk. The C-terminus forms an elongated spine to which L12 dimers bind in a sequential fashion forming a multimeric L10(L12)X complex.

Forms part of the ribosomal stalk, playing a central role in the interaction of the ribosome with GTP-bound translation factors. The protein is Large ribosomal subunit protein uL10 (rplJ) of Mycoplasmopsis pulmonis (strain UAB CTIP) (Mycoplasma pulmonis).